The chain runs to 522 residues: Lysine--tRNA ligase (522 aa).

A 'HIGH' region motif is present at residues 44–52 (PSGLPHIGT). The 'KMSKS' region motif lies at 290 to 294 (KISKS). Position 293 (K293) interacts with ATP.

It belongs to the class-I aminoacyl-tRNA synthetase family.

The protein localises to the cytoplasm. It catalyses the reaction tRNA(Lys) + L-lysine + ATP = L-lysyl-tRNA(Lys) + AMP + diphosphate. This Rickettsia bellii (strain RML369-C) protein is Lysine--tRNA ligase.